The following is a 170-amino-acid chain: Orotate phosphoribosyltransferase (170 aa).

Residues Arg-86, Lys-87, Lys-90, His-92, and 111–119 (EDVTTSGGS) contribute to the 5-phospho-alpha-D-ribose 1-diphosphate site. Thr-115 and Arg-143 together coordinate orotate.

The protein belongs to the purine/pyrimidine phosphoribosyltransferase family. PyrE subfamily. Homodimer. Requires Mg(2+) as cofactor.

The enzyme catalyses orotidine 5'-phosphate + diphosphate = orotate + 5-phospho-alpha-D-ribose 1-diphosphate. It functions in the pathway pyrimidine metabolism; UMP biosynthesis via de novo pathway; UMP from orotate: step 1/2. Functionally, catalyzes the transfer of a ribosyl phosphate group from 5-phosphoribose 1-diphosphate to orotate, leading to the formation of orotidine monophosphate (OMP). The protein is Orotate phosphoribosyltransferase of Methanoculleus marisnigri (strain ATCC 35101 / DSM 1498 / JR1).